The primary structure comprises 205 residues: Recombination protein RecR (205 aa).

The segment at 64–79 adopts a C4-type zinc-finger fold; sequence CRRCFNITVDELCPIC. Residues 87-182 form the Toprim domain; that stretch reads TKICVVEEPL…RVTRPARGLP (96 aa).

This sequence belongs to the RecR family.

In terms of biological role, may play a role in DNA repair. It seems to be involved in an RecBC-independent recombinational process of DNA repair. It may act with RecF and RecO. This chain is Recombination protein RecR, found in Chloroflexus aggregans (strain MD-66 / DSM 9485).